Reading from the N-terminus, the 426-residue chain is Endothelin-1 receptor (426 aa).

A signal peptide spans 1-20; the sequence is MGVLCFLASFWLALVGGAIA. At 21–80 the chain is on the extracellular side; it reads DNAERYSANLSSHVEDFTPFPGTEFNFLGTTLQPPNLALPSNGSMHGYCPQQTKITTAFK. N-linked (GlcNAc...) asparagine glycosylation is found at Asn-29 and Asn-62. Residues 81 to 102 form a helical membrane-spanning segment; that stretch reads YINTVISCTIFIVGMVGNATLL. Residues 103–112 are Cytoplasmic-facing; the sequence is RIIYQNKCMR. A helical membrane pass occupies residues 113-132; it reads NGPNALIASLALGDLIYVVI. Residues 133-159 are Extracellular-facing; the sequence is DLPINVFKLLAGRWPFDHNDFGVFLCK. A disulfide bridge links Cys-158 with Cys-239. A helical membrane pass occupies residues 160-181; that stretch reads LFPFLQKSSVGITVLNLCALSV. The Cytoplasmic segment spans residues 182–205; that stretch reads DRYRAVASWSRVQGIGIPLITAIE. The helical transmembrane segment at 206–229 threads the bilayer; the sequence is IVSIWILSFILAIPEAIGFVMVPF. The Extracellular portion of the chain corresponds to 230–256; it reads EYKGEQHRTCMLNATTKFMEFYQDVKD. Residues 257 to 278 form a helical membrane-spanning segment; it reads WWLFGFYFCMPLVCTAIFYTLM. The Cytoplasmic segment spans residues 279–306; it reads TCEMLNRRNGSLRIALSEHLKQRREVAK. The chain crosses the membrane as a helical span at residues 307–328; the sequence is TVFCLVVIFALCWFPLHLSRIL. Topologically, residues 329 to 347 are extracellular; sequence KKTVYDEMDKNRCELLSFL. The helical transmembrane segment at 348-372 threads the bilayer; it reads LLMDYIGINLATMNSCINPIALYFV. The Cytoplasmic segment spans residues 373-426; the sequence is SKKFKNCFQSCLCCCCHQSKSLMTSVPMNGTSIQWKNQEQNHNTERSSHKDSMN. Ser-424 carries the post-translational modification Phosphoserine.

This sequence belongs to the G-protein coupled receptor 1 family. Endothelin receptor subfamily. EDNRA sub-subfamily. As to quaternary structure, interacts with HDAC7 and KAT5. As to expression, predominantly expressed in vascular smooth muscle cells of a variety of issues, bronchial smooth muscle cells, myocardium, and the pituitary gland.

The protein resides in the cell membrane. Functionally, receptor for endothelin-1. Mediates its action by association with G proteins that activate a phosphatidylinositol-calcium second messenger system. The rank order of binding affinities for ET-A is: ET1 &gt; ET2 &gt;&gt; ET3. This chain is Endothelin-1 receptor, found in Rattus norvegicus (Rat).